We begin with the raw amino-acid sequence, 631 residues long: Interferon-induced GTP-binding protein Mx1 (631 aa).

The region spanning 33–306 (DLALPAIAVI…LTSHICKSLP (274 aa)) is the Dynamin-type G domain. The tract at residues 43–50 (GDQSSGKS) is G1 motif. 43-50 (GDQSSGKS) provides a ligand contact to GTP. Residues 68 to 70 (VTR) are G2 motif. Residues 144–147 (DLPG) form a G3 motif region. GTP-binding positions include 144–148 (DLPGI) and 213–216 (TKPD). Residues 213-216 (TKPD) are G4 motif. A G5 motif region spans residues 245-248 (KCRG). Positions 307–332 (LLEDQINSSHQSASEELQKYGADIPE) are bundle signaling element (BSE). A middle domain region spans residues 332–499 (EDDRTRMSFL…HFQMEQIVYC (168 aa)). The segment at 333 to 601 (DDRTRMSFLV…TSKCSWFLEE (269 aa)) is stalk. Positions 520–522 (KTK) are critical for lipid-binding. Positions 543 to 631 (TTEMTQHLKA…ARQKLAKFSD (89 aa)) constitute a GED domain.

Belongs to the TRAFAC class dynamin-like GTPase superfamily. Dynamin/Fzo/YdjA family. Homooligomer. Oligomerizes into multimeric filamentous or ring-like structures by virtue of its stalk domain. Oligomerization is critical for GTPase activity, protein stability, and recognition of viral target structures. Interacts with TRPC1, TRPC3, TRPC4, TRPC5, TRPC6 and TRPC7. Interacts with HSPA5. Interacts with TUBB/TUBB5. Interacts with DDX39A and DDX39B. In terms of processing, ISGylated.

It is found in the cytoplasm. The protein resides in the nucleus. The protein localises to the endoplasmic reticulum membrane. It localises to the perinuclear region. In terms of biological role, interferon-induced dynamin-like GTPase with antiviral activity against influenza A virus, (IAV), influenza B virus (IBV) and Thogoto virus (THOV). Inhibits FLUAV by interfering with the process of primary transcription, probably by affecting the viral polymerase function. The protein is Interferon-induced GTP-binding protein Mx1 (Mx1) of Mus musculus (Mouse).